A 43-amino-acid chain; its full sequence is Defensin-A (43 aa).

3 disulfide bridges follow: cysteine 3/cysteine 34, cysteine 20/cysteine 39, and cysteine 24/cysteine 41.

The protein localises to the secreted. Antibacterial protein. Strong activity against the Gram-positive bacteria M.luteus, B.megaterium and S.aureus. Reduced activity against Gram-positive bacterium B.subtilis and weak activity against Gram-negative bacterium X.japonicus. No detectable activity against the Gram-negative bacteria E.asbriae, E.coli, P.aeruginosa and S.marcescens. This chain is Defensin-A, found in Anomala cuprea (Cupreous chafer beetle).